The sequence spans 427 residues: Enolase (427 aa).

Gln163 provides a ligand contact to (2R)-2-phosphoglycerate. Residue Glu205 is the Proton donor of the active site. Mg(2+)-binding residues include Asp242, Glu285, and Asp312. (2R)-2-phosphoglycerate is bound by residues Lys337, Arg366, Ser367, and Lys388. The active-site Proton acceptor is the Lys337.

Belongs to the enolase family. It depends on Mg(2+) as a cofactor.

Its subcellular location is the cytoplasm. It is found in the secreted. The protein localises to the cell surface. The catalysed reaction is (2R)-2-phosphoglycerate = phosphoenolpyruvate + H2O. It participates in carbohydrate degradation; glycolysis; pyruvate from D-glyceraldehyde 3-phosphate: step 4/5. Its function is as follows. Catalyzes the reversible conversion of 2-phosphoglycerate (2-PG) into phosphoenolpyruvate (PEP). It is essential for the degradation of carbohydrates via glycolysis. This chain is Enolase, found in Janthinobacterium sp. (strain Marseille) (Minibacterium massiliensis).